A 101-amino-acid polypeptide reads, in one-letter code: Acylphosphatase (101 aa).

Positions 11-99 (SWLVKAIGRV…PRLNRFDRLP (89 aa)) constitute an Acylphosphatase-like domain. Residues Arg26 and Asn44 contribute to the active site.

Belongs to the acylphosphatase family.

It carries out the reaction an acyl phosphate + H2O = a carboxylate + phosphate + H(+). The polypeptide is Acylphosphatase (acyP) (Polaromonas naphthalenivorans (strain CJ2)).